The following is a 137-amino-acid chain: MPTINQLVRKPRQSKIKKSDSPALNKGFNSKKKKFTDLNSPQKRGVCTRVGTMTPRKPNSALRKYARVRLSNNIEINAYIPGIGHNLQEHSVVLVRGGRVRDLPGVRYHIVRGALDTSGVDGRRQGRSLYGTKKPKN.

The segment at 1 to 57 is disordered; that stretch reads MPTINQLVRKPRQSKIKKSDSPALNKGFNSKKKKFTDLNSPQKRGVCTRVGTMTPRK. Asp102 bears the 3-methylthioaspartic acid mark. The interval 118–137 is disordered; it reads SGVDGRRQGRSLYGTKKPKN.

This sequence belongs to the universal ribosomal protein uS12 family. Part of the 30S ribosomal subunit. Contacts proteins S8 and S17. May interact with IF1 in the 30S initiation complex.

With S4 and S5 plays an important role in translational accuracy. Functionally, interacts with and stabilizes bases of the 16S rRNA that are involved in tRNA selection in the A site and with the mRNA backbone. Located at the interface of the 30S and 50S subunits, it traverses the body of the 30S subunit contacting proteins on the other side and probably holding the rRNA structure together. The combined cluster of proteins S8, S12 and S17 appears to hold together the shoulder and platform of the 30S subunit. This chain is Small ribosomal subunit protein uS12, found in Staphylococcus aureus (strain COL).